The primary structure comprises 307 residues: Phospho-N-acetylmuramoyl-pentapeptide-transferase (307 aa).

The next 10 membrane-spanning stretches (helical) occupy residues 3-23, 47-67, 71-91, 105-125, 137-157, 162-182, 186-206, 210-230, 237-257, and 285-305; these read IILF…KYWI, SGTP…FLFF, FFPS…DFKL, IFLS…DYKI, IFYV…INLT, GLAG…NFQF, LTLE…FNSH, IFMG…LSII, LVFL…QVFF, and VVWR…ILWN.

It belongs to the glycosyltransferase 4 family. MraY subfamily. Mg(2+) is required as a cofactor.

The protein localises to the cell inner membrane. The enzyme catalyses UDP-N-acetyl-alpha-D-muramoyl-L-alanyl-gamma-D-glutamyl-meso-2,6-diaminopimeloyl-D-alanyl-D-alanine + di-trans,octa-cis-undecaprenyl phosphate = di-trans,octa-cis-undecaprenyl diphospho-N-acetyl-alpha-D-muramoyl-L-alanyl-D-glutamyl-meso-2,6-diaminopimeloyl-D-alanyl-D-alanine + UMP. It functions in the pathway cell wall biogenesis; peptidoglycan biosynthesis. Its function is as follows. Catalyzes the initial step of the lipid cycle reactions in the biosynthesis of the cell wall peptidoglycan: transfers peptidoglycan precursor phospho-MurNAc-pentapeptide from UDP-MurNAc-pentapeptide onto the lipid carrier undecaprenyl phosphate, yielding undecaprenyl-pyrophosphoryl-MurNAc-pentapeptide, known as lipid I. In Dictyoglomus turgidum (strain DSM 6724 / Z-1310), this protein is Phospho-N-acetylmuramoyl-pentapeptide-transferase.